Consider the following 757-residue polypeptide: uncharacterized protein (757 aa).

Residues 640–709 (GMILEGVVSN…ARKRIALTMR (70 aa)) enclose the S1 motif domain. The span at 710 to 741 (LDDEPGGAKHKMPSENRSRERTAGRKPQRNDR) shows a compositional bias: basic and acidic residues. The tract at residues 710–757 (LDDEPGGAKHKMPSENRSRERTAGRKPQRNDRAPANSAMADAFAKLKR) is disordered.

This is an uncharacterized protein from Neisseria meningitidis serogroup A / serotype 4A (strain DSM 15465 / Z2491).